Reading from the N-terminus, the 587-residue chain is Glutamine--tRNA ligase (587 aa).

The 'HIGH' region motif lies at 58 to 68; it reads PEPNGYLHIGH. Residues 59–61 and 65–71 contribute to the ATP site; these read EPN and HIGHAKS. 2 residues coordinate L-glutamine: Asp91 and Tyr240. Residues Thr259 and 294–295 each bind ATP; that span reads RL. Positions 301–305 match the 'KMSKS' region motif; it reads VTSKR.

It belongs to the class-I aminoacyl-tRNA synthetase family. In terms of assembly, monomer.

It localises to the cytoplasm. It catalyses the reaction tRNA(Gln) + L-glutamine + ATP = L-glutaminyl-tRNA(Gln) + AMP + diphosphate. In Bordetella parapertussis (strain 12822 / ATCC BAA-587 / NCTC 13253), this protein is Glutamine--tRNA ligase.